The chain runs to 258 residues: Heat-labile enterotoxin A chain (258 aa).

Positions 1–18 are cleaved as a signal peptide; sequence MKNITFIFFILLASPLYA. 25 to 39 contacts NAD(+); the sequence is RADSRPPDEIKRSGG. Glu-128 is an active-site residue. Cys-205 and Cys-217 are disulfide-bonded.

It belongs to the enterotoxin A family. As to quaternary structure, heterohexamer of one A chain and of five B chains.

The biological activity of the toxin is produced by the A chain, which activates intracellular adenyl cyclase. The chain is Heat-labile enterotoxin A chain (eltA) from Escherichia coli O78:H11 (strain H10407 / ETEC).